Consider the following 612-residue polypeptide: UvrABC system protein C (612 aa).

The GIY-YIG domain maps to Thr20–Ile98. The region spanning Ser208–Leu243 is the UVR domain.

This sequence belongs to the UvrC family. As to quaternary structure, interacts with UvrB in an incision complex.

It is found in the cytoplasm. In terms of biological role, the UvrABC repair system catalyzes the recognition and processing of DNA lesions. UvrC both incises the 5' and 3' sides of the lesion. The N-terminal half is responsible for the 3' incision and the C-terminal half is responsible for the 5' incision. The protein is UvrABC system protein C of Francisella tularensis subsp. novicida (strain U112).